The primary structure comprises 405 residues: Fragilysin (405 aa).

Positions 1–25 (MFILNFNKMKNVKLLLMLGTAALLA) are cleaved as a signal peptide. H356 provides a ligand contact to Zn(2+). The active site involves E357. Residues H360 and H366 each coordinate Zn(2+).

The protein belongs to the peptidase M10C family. Zn(2+) is required as a cofactor.

The protein resides in the secreted. The enzyme catalyses Broad proteolytic specificity, bonds hydrolyzed includes -Gly-|-Leu-, -Met-|-Leu-, -Phe-|-Leu-, -Cys-|-Leu-, -Leu-|-Gly-.. Its function is as follows. Diarrheal toxin that hydrolyzes gelatin, azocoll, actin, tropomyosin, and fibrinogen. The polypeptide is Fragilysin (btfP) (Bacteroides fragilis).